The chain runs to 331 residues: Homoserine kinase (331 aa).

It belongs to the pseudomonas-type ThrB family.

The catalysed reaction is L-homoserine + ATP = O-phospho-L-homoserine + ADP + H(+). It functions in the pathway amino-acid biosynthesis; L-threonine biosynthesis; L-threonine from L-aspartate: step 4/5. This Burkholderia thailandensis (strain ATCC 700388 / DSM 13276 / CCUG 48851 / CIP 106301 / E264) protein is Homoserine kinase.